We begin with the raw amino-acid sequence, 418 residues long: Putative L-glutamine:3-amino-2,3-dideoxy-scyllo-inosose aminotransferase (418 aa).

K199 bears the N6-(pyridoxal phosphate)lysine mark.

Belongs to the DegT/DnrJ/EryC1 family. L-glutamine:2-deoxy-scyllo-inosose/scyllo-inosose aminotransferase subfamily. The cofactor is pyridoxal 5'-phosphate.

The enzyme catalyses 3-amino-2,3-dideoxy-scyllo-inosose + L-glutamine = 2-deoxystreptamine + 2-oxoglutaramate. Its pathway is metabolic intermediate biosynthesis; 2-deoxystreptamine biosynthesis; 2-deoxystreptamine from D-glucose 6-phosphate: step 4/4. It functions in the pathway antibiotic biosynthesis; gentamicin biosynthesis. In terms of biological role, catalyzes the transamination of 3-amino-2,3-dideoxy-scyllo-inosose (amino-DOI) into 2-deoxystreptamine (DOS). The sequence is that of Putative L-glutamine:3-amino-2,3-dideoxy-scyllo-inosose aminotransferase (gtmD) from Micromonospora echinospora (Micromonospora purpurea).